We begin with the raw amino-acid sequence, 300 residues long: PTB domain-containing engulfment adapter protein 1 (300 aa).

Residues 21–176 (AKHFIPYNAK…GGLQKRIQDL (156 aa)) enclose the PID domain. Residues 160-199 (VETRKQIGGLQKRIQDLETENVELKKQLQVLEEQLMIAQV) are a coiled coil.

Belongs to the ced-6 family.

Its subcellular location is the cytoplasm. May function as an adapter protein. Required for efficient phagocytosis of apoptotic cells. May play a role in the internalization and endosomal trafficking of various lrp1 ligands. This Danio rerio (Zebrafish) protein is PTB domain-containing engulfment adapter protein 1 (gulp1).